The chain runs to 115 residues: Meiotically up-regulated gene 42 protein (115 aa).

Has a role in meiosis. The chain is Meiotically up-regulated gene 42 protein (mug42) from Schizosaccharomyces pombe (strain 972 / ATCC 24843) (Fission yeast).